The primary structure comprises 166 residues: Transcription factor HES-5 (166 aa).

Positions 16–72 (KNRLRKPVVEKMRRDRINSSIEQLKLLLEQEFARHQPNSKLEKADILEMAVSYLKHS) constitute a bHLH domain. The region spanning 88-119 (YSEGYSWCLQEAVQFLTLHAASDTQMKLLYHF) is the Orange domain. Residues 125-144 (APAAPAKEPKAPGAAPPPAL) are disordered. The short motif at 163-166 (WRPW) is the WRPW motif element.

In terms of assembly, transcription repression requires formation of a complex with a corepressor protein of the Groucho/TLE family. Expressed in fetal heart and brain tumors.

The protein resides in the nucleus. Its function is as follows. Transcriptional repressor of genes that require a bHLH protein for their transcription. Plays an important role as neurogenesis negative regulator. This is Transcription factor HES-5 (HES5) from Homo sapiens (Human).